Here is a 379-residue protein sequence, read N- to C-terminus: AT-rich binding protein (379 aa).

The C2H2-type 1 zinc finger occupies 29–52 (IVCHTCQEELQTQDQFWKHIQDEH). The span at 114-124 (EQREVELHEAH) shows a compositional bias: basic and acidic residues. Disordered regions lie at residues 114–148 (EQRE…DAAK) and 221–267 (PTAS…STTL). 3 stretches are compositionally biased toward low complexity: residues 125–143 (QQQQ…QQQQ), 223–242 (ASFV…TTPP), and 249–262 (QQQQ…QQQQ). 2 C2H2-type zinc fingers span residues 312-336 (YICD…RVVH) and 342-365 (FNCD…KKKH).

It is found in the nucleus. Functionally, may be a transcription factor for genes having (A+T) stretches in their promoter and/or enhancer regions. Binds to AT rich DNA. The chain is AT-rich binding protein from Drosophila willistoni (Fruit fly).